A 593-amino-acid chain; its full sequence is ATP-dependent lipid A-core flippase (593 aa).

The next 6 membrane-spanning stretches (helical) occupy residues 33–53 (IGIVVLAVVTMGVVAATEAGI), 75–95 (WYVPIAVIGLALVRGVSQYTS), 137–157 (AIVFEVNQILSVLTGVMVTLV), 164–184 (IFLLGYLFYLNWRLTLIVAVI), 262–282 (QPLTQFLASIALAVVITIAVV), and 292–312 (GGFVAFVTSMLLVISPLKHLI). The ABC transmembrane type-1 domain maps to 37–320 (VLAVVTMGVV…LIDVNQPLQR (284 aa)). The ABC transporter domain maps to 352–586 (IEFRAVSFDY…GGLYAHLHRI (235 aa)). 386–393 (GPSGSGKT) lines the ATP pocket.

The protein belongs to the ABC transporter superfamily. Lipid exporter (TC 3.A.1.106) family. As to quaternary structure, homodimer.

Its subcellular location is the cell inner membrane. It catalyses the reaction ATP + H2O + lipid A-core oligosaccharideSide 1 = ADP + phosphate + lipid A-core oligosaccharideSide 2.. In terms of biological role, involved in lipopolysaccharide (LPS) biosynthesis. Translocates lipid A-core from the inner to the outer leaflet of the inner membrane. Transmembrane domains (TMD) form a pore in the inner membrane and the ATP-binding domain (NBD) is responsible for energy generation. The sequence is that of ATP-dependent lipid A-core flippase from Burkholderia orbicola (strain AU 1054).